We begin with the raw amino-acid sequence, 252 residues long: Chitooligosaccharide deacetylase (252 aa).

Residues His-61 and His-125 each contribute to the Mg(2+) site.

The protein belongs to the YdjC deacetylase family. ChbG subfamily. Homodimer. It depends on Mg(2+) as a cofactor.

The protein resides in the cytoplasm. The enzyme catalyses N,N'-diacetylchitobiose + H2O = N-acetyl-beta-D-glucosaminyl-(1-&gt;4)-D-glucosamine + acetate. It catalyses the reaction diacetylchitobiose-6'-phosphate + H2O = N'-monoacetylchitobiose-6'-phosphate + acetate. It functions in the pathway glycan degradation; chitin degradation. In terms of biological role, involved in the degradation of chitin. ChbG is essential for growth on the acetylated chitooligosaccharides chitobiose and chitotriose but is dispensable for growth on cellobiose and chitosan dimer, the deacetylated form of chitobiose. Deacetylation of chitobiose-6-P and chitotriose-6-P is necessary for both the activation of the chb promoter by the regulatory protein ChbR and the hydrolysis of phosphorylated beta-glucosides by the phospho-beta-glucosidase ChbF. Catalyzes the removal of only one acetyl group from chitobiose-6-P to yield monoacetylchitobiose-6-P, the inducer of ChbR and the substrate of ChbF. This chain is Chitooligosaccharide deacetylase, found in Salmonella heidelberg (strain SL476).